The sequence spans 144 residues: Small polypeptide DEVIL 18 (144 aa).

Residues 30-58 (SFSTKTSSSSSKPVFTRSFSTKPTSYSSS) show a composition bias toward low complexity. The disordered stretch occupies residues 30–89 (SFSTKTSSSSSKPVFTRSFSTKPTSYSSSEPIFRRSFSAKPTSSKSPFLSRSGSTKCPVD). Residues 42-58 (PVFTRSFSTKPTSYSSS) traverse the membrane as a helical segment. Residues 68–84 (AKPTSSKSPFLSRSGST) show a composition bias toward polar residues. The interval 108–139 (SVTRKCRNMAKEHKSRFYIMKRCVLMLVCWHK) is required for DVL/RTFL small polypeptide activity.

This sequence belongs to the DVL/RTFL small polypeptides family.

Its subcellular location is the cell membrane. Small polypeptide acting as a regulatory molecule which coordinates cellular responses required for differentiation, growth and development, probably by restricting polar cell proliferation in lateral organs and coordinating socket cell recruitment and differentiation at trichome sites. In Arabidopsis thaliana (Mouse-ear cress), this protein is Small polypeptide DEVIL 18.